Consider the following 418-residue polypeptide: F-box/LRR-repeat protein 14 (418 aa).

Positions 2–48 (ETHISCLFPELLAMIFGYLDVRDKGRAAQVCTAWRDAAYHKSVWRGV) constitute an F-box domain. Residues 2-48 (ETHISCLFPELLAMIFGYLDVRDKGRAAQVCTAWRDAAYHKSVWRGV) form a required for down-regulation of SNAI1 region. LRR repeat units follow at residues 144–163 (GLEVLELGGCSNITNTGLLL), 170–191 (RLKSLNLRSCRHLSDVGIGHLA), 203–225 (GLEQLTLQDCQKLTDLSLKHISR), 229–250 (GLRLLNLSFCGGISDAGLLHLS), and 254–275 (SLRSLNLRSCDNISDTGIMHLA).

In terms of assembly, part of a SCF (SKP1-cullin-F-box) ubiquitin-protein ligase complex. Interacts with SKP1 and CUL1. Interacts with SNAI1; the interaction requires the phosphorylation of the two serine residues in the substrate destruction motif D-S-G-X(2,3,4)-S.

It localises to the cytoplasm. Substrate-recognition component of some SCF (SKP1-CUL1-F-box protein)-type E3 ubiquitin-protein ligase complexes. The SCF(FBXL14) complex acts by mediating ubiquitination and subsequent degradation of SNAI1. In Homo sapiens (Human), this protein is F-box/LRR-repeat protein 14 (FBXL14).